A 611-amino-acid polypeptide reads, in one-letter code: MQKSALAIALASLLTPISYLHANEAQPQETVVVTANRFEQKASSTLADVEIITRQDIEQTQAKTLPELLRRLTGVQITQNGGRGQLASLFVRGTSSDQVLVLVDGIRFARAAKGAVDFNQIPLTYVDRIEYVRGARASLYGSEAIGGVINIITKARSQQQGTTVSAGLGSLDYQELSIASGVAIGEKGQMNVALGTESDKGYNVRPVPGVNDGDRHGFRSDNALLGYVHQFDESWSLFANARAYENIYQYDNSYGTRDYKEAEKDDLSFTIGTQYQSERWVSELQLTTQKQKSWDYTQSKGKYSDTSDNLEQRNIQWINRYLVNDVWTFAGGVDWRDESYIDKTADKEFDRSNTAAFAVVAAEWQQWLLEASLRFDDNQEYGSQTTHNIALGYQFIPEFGVKASYGSAFKAPNLYQQYDPSYGNVNLQPEDADSAELSFYGLFSGIKWSITGYDYKINNLIDYNSTTKNYQNVIGESNIKGVEFTAEFATGIVQHQLSVDLKDADDSKGKTLQRRAEHMYKWNALVAFEQVDWSIGYQYVGKRPDLDYNTYPTQNITLDAYSLVDTSVSYYVTDSTTISARIDNLLDKEYETANGYPAAERAYYLNIGYQF.

An N-terminal signal peptide occupies residues 1 to 22 (MQKSALAIALASLLTPISYLHA). A TonB box motif is present at residues 29-36 (ETVVVTAN). Residues 41-154 (KASSTLADVE…IGGVINIITK (114 aa)) form the TBDR plug domain. In terms of domain architecture, TBDR beta-barrel spans 159 to 611 (QQGTTVSAGL…AYYLNIGYQF (453 aa)). The TonB C-terminal box signature appears at 594 to 611 (NGYPAAERAYYLNIGYQF).

Belongs to the TonB-dependent receptor family. BtuB (TC 1.B.14.3.1) subfamily.

The protein localises to the cell outer membrane. Its function is as follows. Involved in the active translocation of vitamin B12 (cyanocobalamin) across the outer membrane to the periplasmic space. It derives its energy for transport by interacting with the trans-periplasmic membrane protein TonB. In Vibrio cholerae serotype O1 (strain ATCC 39541 / Classical Ogawa 395 / O395), this protein is Vitamin B12 transporter BtuB.